The following is a 341-amino-acid chain: Chitin synthase 3 complex protein CSI2 (341 aa).

The span at 35–70 (SSSTKAADSSSKGSSSAKTTTSLGKSSVTSKDVSSS) shows a compositional bias: low complexity. Disordered stretches follow at residues 35–78 (SSST…SSTK), 272–291 (DSLS…GKFT), and 298–341 (NYTS…DGKE).

In terms of biological role, appears to be a structural component of the chitin synthase 3 complex. The sequence is that of Chitin synthase 3 complex protein CSI2 (CSI2) from Saccharomyces cerevisiae (strain ATCC 204508 / S288c) (Baker's yeast).